Reading from the N-terminus, the 426-residue chain is Enolase (426 aa).

Residue glutamine 163 coordinates (2R)-2-phosphoglycerate. Residue glutamate 205 is the Proton donor of the active site. The Mg(2+) site is built by aspartate 242, glutamate 285, and aspartate 312. (2R)-2-phosphoglycerate-binding residues include lysine 337, arginine 366, serine 367, and lysine 388. Lysine 337 serves as the catalytic Proton acceptor.

It belongs to the enolase family. Requires Mg(2+) as cofactor.

The protein resides in the cytoplasm. It localises to the secreted. It is found in the cell surface. It catalyses the reaction (2R)-2-phosphoglycerate = phosphoenolpyruvate + H2O. Its pathway is carbohydrate degradation; glycolysis; pyruvate from D-glyceraldehyde 3-phosphate: step 4/5. Functionally, catalyzes the reversible conversion of 2-phosphoglycerate (2-PG) into phosphoenolpyruvate (PEP). It is essential for the degradation of carbohydrates via glycolysis. This is Enolase from Caulobacter vibrioides (strain ATCC 19089 / CIP 103742 / CB 15) (Caulobacter crescentus).